The sequence spans 839 residues: Protein translocase subunit SecA (839 aa).

ATP contacts are provided by residues Gln85, 103 to 107, and Asp493; that span reads GEGKT. Residues 780 to 790 are compositionally biased toward basic and acidic residues; it reads QIHEQERERAS. Residues 780 to 839 are disordered; that stretch reads QIHEQERERASQRATTAAPQNIQSQQSANTDDLPKVERNEACPCGSGKKFKNCHGRKSFS. The span at 791–809 shows a compositional bias: polar residues; sequence QRATTAAPQNIQSQQSANT. Zn(2+) contacts are provided by Cys821, Cys823, Cys832, and His833. A compositionally biased stretch (basic residues) spans 827–839; it reads KKFKNCHGRKSFS.

Belongs to the SecA family. As to quaternary structure, monomer and homodimer. Part of the essential Sec protein translocation apparatus which comprises SecA, SecYEG and auxiliary proteins SecDF. Other proteins may also be involved. It depends on Zn(2+) as a cofactor.

The protein resides in the cell membrane. Its subcellular location is the cytoplasm. It catalyses the reaction ATP + H2O + cellular proteinSide 1 = ADP + phosphate + cellular proteinSide 2.. Part of the Sec protein translocase complex. Interacts with the SecYEG preprotein conducting channel. Has a central role in coupling the hydrolysis of ATP to the transfer of proteins into and across the cell membrane, serving as an ATP-driven molecular motor driving the stepwise translocation of polypeptide chains across the membrane. The sequence is that of Protein translocase subunit SecA from Streptococcus pyogenes serotype M6 (strain ATCC BAA-946 / MGAS10394).